The primary structure comprises 119 residues: MSITHLMRQQVEELFKRFLEKTGLSEEATVYAVFIPKEEEVDEESVDVFEQRVNPKDAESVENFVSRLTKVALENDVKELKLYALVLDRDGETLIIAREENPEADEVIKELIERMKEEV.

This is an uncharacterized protein from Aquifex aeolicus (strain VF5).